The following is a 130-amino-acid chain: Type VII secretion system extracellular protein C (130 aa).

The protein belongs to the EsxC family. Forms both homodimers and heterodimers with EsxA. Homodimerization is calcium-dependent.

The protein resides in the secreted. The polypeptide is Type VII secretion system extracellular protein C (Staphylococcus aureus (strain USA300)).